The following is a 223-amino-acid chain: Probable GTP-binding protein EngB (223 aa).

The EngB-type G domain occupies 25–199 (TGVEIAFAGR…SRLLQDWFDE (175 aa)). GTP-binding positions include 33-40 (GRSNAGKS), 60-64 (GRTQH), 78-81 (DLPG), 145-148 (TKAD), and 178-180 (FSS). Positions 40 and 62 each coordinate Mg(2+).

It belongs to the TRAFAC class TrmE-Era-EngA-EngB-Septin-like GTPase superfamily. EngB GTPase family. Mg(2+) is required as a cofactor.

In terms of biological role, necessary for normal cell division and for the maintenance of normal septation. In Nitrosomonas eutropha (strain DSM 101675 / C91 / Nm57), this protein is Probable GTP-binding protein EngB.